The chain runs to 179 residues: Signal peptidase complex catalytic subunit SEC11A (179 aa).

Over M1 to R16 the chain is Cytoplasmic. Residues Q17–W36 form a helical; Signal-anchor for type II membrane protein membrane-spanning segment. Topologically, residues K37 to E179 are lumenal. Active-site charge relay system residues include S56, H96, and D122. Positions A165–V176 are C-terminal short (CTS) helix.

The protein belongs to the peptidase S26B family. As to quaternary structure, component of the signal peptidase complex paralog A (SPC-A) composed of a catalytic subunit SEC11A and three accessory subunits SPCS1, SPCS2 and SPCS3. Within the complex, interacts with SPCS2 and SPCS3. The complex induces a local thinning of the ER membrane which is used to measure the length of the signal peptide (SP) h-region of protein substrates. This ensures the selectivity of the complex towards h-regions shorter than 18-20 amino acids.

The protein localises to the endoplasmic reticulum membrane. It catalyses the reaction Cleavage of hydrophobic, N-terminal signal or leader sequences from secreted and periplasmic proteins.. Catalytic component of the signal peptidase complex (SPC) which catalyzes the cleavage of N-terminal signal sequences from nascent proteins as they are translocated into the lumen of the endoplasmic reticulum. Specifically cleaves N-terminal signal peptides that contain a hydrophobic alpha-helix (h-region) shorter than 18-20 amino acids. This is Signal peptidase complex catalytic subunit SEC11A (Sec11a) from Rattus norvegicus (Rat).